We begin with the raw amino-acid sequence, 471 residues long: Adenosylhomocysteinase (471 aa).

Substrate-binding residues include Thr60, Asp135, and Glu196. Thr197–Thr199 contributes to the NAD(+) binding site. Lys226 and Asp230 together coordinate substrate. Residues Asn231, Gly260–Gly265, Glu283, Asn318, Ile339–His341, and Asn387 contribute to the NAD(+) site.

The protein belongs to the adenosylhomocysteinase family. NAD(+) is required as a cofactor.

Its subcellular location is the cytoplasm. It catalyses the reaction S-adenosyl-L-homocysteine + H2O = L-homocysteine + adenosine. Its pathway is amino-acid biosynthesis; L-homocysteine biosynthesis; L-homocysteine from S-adenosyl-L-homocysteine: step 1/1. In terms of biological role, may play a key role in the regulation of the intracellular concentration of adenosylhomocysteine. The sequence is that of Adenosylhomocysteinase from Chlorobaculum parvum (strain DSM 263 / NCIMB 8327) (Chlorobium vibrioforme subsp. thiosulfatophilum).